The chain runs to 283 residues: Elongation factor Ts (283 aa).

An involved in Mg(2+) ion dislocation from EF-Tu region spans residues 80 to 83 (TDFV).

Belongs to the EF-Ts family.

It localises to the cytoplasm. In terms of biological role, associates with the EF-Tu.GDP complex and induces the exchange of GDP to GTP. It remains bound to the aminoacyl-tRNA.EF-Tu.GTP complex up to the GTP hydrolysis stage on the ribosome. This Pectobacterium atrosepticum (strain SCRI 1043 / ATCC BAA-672) (Erwinia carotovora subsp. atroseptica) protein is Elongation factor Ts.